We begin with the raw amino-acid sequence, 348 residues long: AT-hook motif nuclear-localized protein 9 (348 aa).

The disordered stretch occupies residues 18–156 (HRGLSGSGPP…MASVGELMPS (139 aa)). The segment covering 31–46 (GSPQQQQGLRHLPNQN) has biased composition (polar residues). The span at 47 to 60 (SPFGSGSTGFGSPS) shows a compositional bias: low complexity. Residues 98-106 (KRKRGRPRK) carry the Bipartite nuclear localization signal motif. The segment at residues 98-110 (KRKRGRPRKYGQD) is a DNA-binding region (a.T hook 1). Over residues 112–131 (SVSLALSSSSVSTITPNNSN) the composition is skewed to low complexity. A DNA-binding region (a.T hook 2) is located at residues 132–144 (KRGRGRPPGSGKK). The 143-residue stretch at 157 to 299 (SSGMSFTPHV…EEEASEVVQE (143 aa)) folds into the PPC domain.

The protein resides in the nucleus. Its function is as follows. Transcription factor that specifically binds AT-rich DNA sequences related to the nuclear matrix attachment regions (MARs). This is AT-hook motif nuclear-localized protein 9 from Arabidopsis thaliana (Mouse-ear cress).